Here is a 180-residue protein sequence, read N- to C-terminus: Cytokinin-beta-glucosidase 2 (180 aa).

Hydrolyzes cytokinin glucosides thus liberating free cytokinins. The chain is Cytokinin-beta-glucosidase 2 (ROLC2) from Panax ginseng (Korean ginseng).